Here is a 112-residue protein sequence, read N- to C-terminus: Ig kappa chain V-III region PC 7132 (112 aa).

The tract at residues 1 to 23 is framework-1; that stretch reads DIVLTQSPASLAVSLGQRATISC. Cys-23 and Cys-92 are disulfide-bonded. The complementarity-determining-1 stretch occupies residues 24–38; sequence RASESVDNYGISFMN. Residues 39-53 form a framework-2 region; it reads WFQQKPGQPPKLLIY. Positions 54–60 are complementarity-determining-2; the sequence is AASNQGS. The interval 61–92 is framework-3; it reads GVPARFSGSGSGTDFSLNIHPMEEDDTAMYFC. The tract at residues 93–102 is complementarity-determining-3; that stretch reads QQSKEVPPYT. The segment at 103-112 is framework-4; the sequence is FGGGTKLEIK.

This is Ig kappa chain V-III region PC 7132 from Mus musculus (Mouse).